The sequence spans 305 residues: MYYGFDIGGTKIELAVFNEKLEKRYSERVDTPKHSYDEWLNVITHLVQKADEKFACKGTVGIGVPGFVNQETGIAEITNIRVADNKPILKDLSERLGREVRAENDANCFALSEAWDKDNQQYPVVLGLILGTGFGGGLVFNGKVHSGQSGMAGELGHLQLNYHALKLLGWDKAPIYECGCGNKACLDTYLSGRGFEMLYRDLQGKALSAKEIIRCFYDKDESAVKFVELFIELCAISIGNIITALDPHVIILGGGLSNFDYLYEALPKALPQHLMRTAKVPLIKKAKFGDSGGVRGAAALFLSRD.

Residues 4 to 11 (GFDIGGTK) and 133 to 140 (GFGGGLVF) each bind ATP. Zn(2+)-binding residues include H157, C178, C180, and C185.

It belongs to the ROK (NagC/XylR) family. NagK subfamily.

The catalysed reaction is N-acetyl-D-glucosamine + ATP = N-acetyl-D-glucosamine 6-phosphate + ADP + H(+). The protein operates within cell wall biogenesis; peptidoglycan recycling. Catalyzes the phosphorylation of N-acetyl-D-glucosamine (GlcNAc) derived from cell-wall degradation, yielding GlcNAc-6-P. The chain is N-acetyl-D-glucosamine kinase from Histophilus somni (strain 129Pt) (Haemophilus somnus).